Reading from the N-terminus, the 128-residue chain is Large ribosomal subunit protein bL20 (128 aa).

This sequence belongs to the bacterial ribosomal protein bL20 family.

Functionally, binds directly to 23S ribosomal RNA and is necessary for the in vitro assembly process of the 50S ribosomal subunit. It is not involved in the protein synthesizing functions of that subunit. The sequence is that of Large ribosomal subunit protein bL20 from Anaplasma phagocytophilum (strain HZ).